A 475-amino-acid polypeptide reads, in one-letter code: Solute carrier family 46 member 2 (475 aa).

Over 1 to 23 (MSPEVTCPRRGHLPRFHPRTWVE) the chain is Cytoplasmic. The helical transmembrane segment at 24–44 (PVVASSQVAASLYDAGLLLVV) threads the bilayer. At 45-78 (KASYGTGGSSNHSASPSPRGALEDQQQRAISNFY) the chain is on the extracellular side. N-linked (GlcNAc...) asparagine glycosylation occurs at N55. A helical transmembrane segment spans residues 79-99 (IIYNLVVGLSPLLSAYGLGWL). Topologically, residues 100–108 (SDRYHRKIS) are cytoplasmic. Residues 109-129 (ICMSLLGFLLSRLGLLLKVLL) form a helical membrane-spanning segment. Residues 130-138 (DWPVEVLYG) are Extracellular-facing. The helical transmembrane segment at 139 to 159 (AAALNGLFGGFSAFWSGVMAL) threads the bilayer. At 160 to 172 (GSLGSSEGRRSVR) the chain is on the cytoplasmic side. Residues 173–193 (LILIDLMLGLAGFCGSMASGH) traverse the membrane as a helical segment. Residues 194-205 (LFKQMAGHSGQG) lie on the Extracellular side of the membrane. The helical transmembrane segment at 206–226 (LILTACSVSCASFALLYSLLV) threads the bilayer. Residues 227–282 (LKVPESVAKPSQELPAVDTVSGTVGTYRTLDPDQLDQQYAVGHPPSPGKAKPHKTT) are Cytoplasmic-facing. A helical membrane pass occupies residues 283–303 (IALLFVGAIIYDLAVVGTVDV). At 304–320 (IPLFVLREPLGWNQVQV) the chain is on the extracellular side. The helical transmembrane segment at 321-341 (GYGMAAGYTIFITSFLGVLVF) threads the bilayer. Topologically, residues 342–347 (SRCFRD) are cytoplasmic. A helical transmembrane segment spans residues 348–368 (TTMIMIGMVSFGSGALLLAFV). The Extracellular segment spans residues 369 to 370 (KE). A helical transmembrane segment spans residues 371–391 (TYMFYIARAVMLFALIPVTTI). Residues 392–406 (RSAMSKLIKGSSYGK) lie on the Cytoplasmic side of the membrane. The helical transmembrane segment at 407–427 (VFVILQLSLALTGVVTSTLYN) threads the bilayer. Residues 428 to 435 (KIYQLTMD) lie on the Extracellular side of the membrane. Residues 436–456 (MFVGSCFALSSFLSFLAIIPI) traverse the membrane as a helical segment. Over 457–475 (SIVAYKQVPLSPYGDIIEK) the chain is Cytoplasmic.

It belongs to the major facilitator superfamily. SLC46A family. In terms of processing, glycosylated. Strongly expressed in the adult thymus. Expressed in spleen, lymph nodes, thymus, PBL, bone marrow and fetal liver. Expressed in monocytes and pre-dendridic cells.

The protein localises to the endosome membrane. Its subcellular location is the cell membrane. It catalyses the reaction N-acetyl-beta-D-glucosaminyl-(1-&gt;4)-1,6-anhydro-N-acetyl-beta-D-muramoyl-L-alanyl-gamma-D-glutamyl-meso-2,6-diaminopimeloyl-D-alanine(out) + n H(+)(out) = N-acetyl-beta-D-glucosaminyl-(1-&gt;4)-1,6-anhydro-N-acetyl-beta-D-muramoyl-L-alanyl-gamma-D-glutamyl-meso-2,6-diaminopimeloyl-D-alanine(in) + n H(+)(in). It carries out the reaction L-alanyl-gamma-D-glutamyl-meso-2,6-diaminopimelate(out) + n H(+)(out) = L-alanyl-gamma-D-glutamyl-meso-2,6-diaminopimelate(in) + n H(+)(in). The catalysed reaction is N-acetyl-D-muramoyl-L-alanyl-D-isoglutamine(out) + n H(+)(out) = N-acetyl-D-muramoyl-L-alanyl-D-isoglutamine(in) + n H(+)(in). The enzyme catalyses 2',3'-cGAMP(out) + n H(+)(out) = 2',3'-cGAMP(in) + n H(+)(in). It catalyses the reaction 3',3'-cGAMP(out) + n H(+)(out) = 3',3'-cGAMP(in) + n H(+)(in). Proton-coupled transporter that delivers pathogen-associated or danger-associated molecular patterns to cytosolic pattern recognition receptors as part of the innate immune response to microbes or tissue injury. Has selectivity toward muropeptides that contain the amino acid diaminopimelic acid (DAP-type peptidoglycan muropeptides) including Tri-DAP and tracheal toxin (TCT), common in Gram-negative bacteria and Gram-positive bacilli. In the context of immune recognition of skin microbiota, shuttles bacterial muropeptides across the endolysosomal membranes into the cytosol for recognition by NOD1, triggering MYD88-dependent secretion of IL1A and neutrophil recruitment in a pyroptosis-type inflammatory process. To a lesser extent and redundantly, transports muramyl dipeptides derived from most bacterial proteoglycans, eliciting NOD2 receptor activation and downstream inflammatory responses. Postulated to function as a dominant importer of cyclic GMP-AMP dinucleotides (cGAMPs) in monocyte and macrophage cell lineages. Selectively imports cGAMPs derived from pathogenic bacteria such as 3'3'-cGAMP thus providing for differential immune recognition of pathogenic versus commensal bacteria. During tumorigenesis may transport extracellular tumor-derived 2'3'-cGAMP across the plasma membrane of M1-polarized macrophages to activate the anti-tumoral stimulator of interferon genes (STING) pathway. The transport mechanism, its electrogenicity and stoichiometry remain to be elucidated. The polypeptide is Solute carrier family 46 member 2 (Homo sapiens (Human)).